A 262-amino-acid chain; its full sequence is ATP synthase subunit a (262 aa).

6 consecutive transmembrane segments (helical) span residues 50-70 (TMIMTWITMALVLLFAWACTK), 107-127 (MMPIIVTFFIYIVFANLLGLI), 141-161 (FGLALIVVLLIHYHGLKANGV), 194-214 (LYGNIFAGEVLIAVLLGLINI), 218-238 (VFGGFIPSVIWLAFSVFVGFV), and 239-259 (QAFVFSMLTIAYVSQFAAHEA).

The protein belongs to the ATPase A chain family. In terms of assembly, F-type ATPases have 2 components, CF(1) - the catalytic core - and CF(0) - the membrane proton channel. CF(1) has five subunits: alpha(3), beta(3), gamma(1), delta(1), epsilon(1). CF(0) has three main subunits: a(1), b(2) and c(9-12). The alpha and beta chains form an alternating ring which encloses part of the gamma chain. CF(1) is attached to CF(0) by a central stalk formed by the gamma and epsilon chains, while a peripheral stalk is formed by the delta and b chains.

Its subcellular location is the cell membrane. In terms of biological role, key component of the proton channel; it plays a direct role in the translocation of protons across the membrane. This is ATP synthase subunit a from Desulforamulus reducens (strain ATCC BAA-1160 / DSM 100696 / MI-1) (Desulfotomaculum reducens).